A 60-amino-acid chain; its full sequence is UPF0434 protein SG0997 (60 aa).

Belongs to the UPF0434 family.

This Sodalis glossinidius (strain morsitans) protein is UPF0434 protein SG0997.